The chain runs to 425 residues: Histone-binding protein RBBP7 (425 aa).

The residue at position 2 (Ala2) is an N-acetylalanine. Position 3 is a phosphoserine (Ser3). At Lys4 the chain carries N6-acetyllysine; alternate. A Glycyl lysine isopeptide (Lys-Gly) (interchain with G-Cter in SUMO2); alternate cross-link involves residue Lys4. Lys4 participates in a covalent cross-link: Glycyl lysine isopeptide (Lys-Gly) (interchain with G-Cter in ubiquitin); alternate. Thr10 is modified (phosphothreonine). WD repeat units follow at residues Gln47–His122, Arg128–Arg173, Gly181–Asp217, Val228–Asp269, Val275–Phe312, Glu318–His369, and Ile376–Met403. Residue Ser95 is modified to Phosphoserine. Lys101 is covalently cross-linked (Glycyl lysine isopeptide (Lys-Gly) (interchain with G-Cter in SUMO2)). Lys119 is modified (N6-acetyllysine). Lys155 is covalently cross-linked (Glycyl lysine isopeptide (Lys-Gly) (interchain with G-Cter in SUMO2)). Lys159 is subject to N6-acetyllysine; alternate. Lys159 is covalently cross-linked (Glycyl lysine isopeptide (Lys-Gly) (interchain with G-Cter in SUMO2); alternate). Ser354 is modified (phosphoserine).

It belongs to the WD repeat RBAP46/RBAP48/MSI1 family. Binds directly to helix 1 of the histone fold of histone H4, a region that is not accessible when H4 is in chromatin. Subunit of the type B histone acetyltransferase (HAT) complex, composed of RBBP7 and HAT1. Subunit of the core histone deacetylase (HDAC) complex, which is composed of HDAC1, HDAC2, RBBP4 and RBBP7. The core HDAC complex associates with SIN3A, ARID4B/SAP180, SAP18, SAP30, SAP130, SUDS3/SAP45 and possibly ARID4A/RBP1 and ING1 to form the SIN3 HDAC complex. Component of the nucleosome remodeling and deacetylase (NuRD) repressor complex, composed of core proteins MTA1, MTA2, MTA3, RBBP4, RBBP7, HDAC1, HDAC2, MBD2, MBD3, and peripherally associated proteins CDK2AP1, CDK2AP2, GATAD2A, GATAD2B, CHD3, CHD4 and CHD5. The exact stoichiometry of the NuRD complex is unknown, and some subunits such as MBD2 and MBD3, GATAD2A and GATAD2B, and CHD3, CHD4 and CHD5 define mutually exclusive NuRD complexes. The NuRD complex may interact with MBD3L1. The NuRD complex may interact with MBD3L2. Subunit of the PRC2/EED-EZH2 complex, which is composed of at least EED, EZH2, RBBP4, RBBP7 and SUZ12. The PRC2/EED-EZH2 complex may also associate with HDAC1. Component of the NURF-1 ISWI chromatin remodeling complex (also called the nucleosome-remodeling factor (NURF) complex) at least composed of SMARCA1, BPTF, RBBP4 and RBBP7. Within the complex interacts with SMARCA1. Component of the BPFT-SMARCA1 complex at least composed of SMARCA1, BPFT, RBBP4 and RBBP7; the complex is catalytically inactive and does not remodel chromatin. Within the complex interacts with SMARCA1. Interacts with BRCA1. Interacts with CDK2AP1. Interacts with CENPA. Interacts with CHD3. Interacts with CHD4. Interacts with CREBBP, and this interaction may be enhanced by the binding of phosphorylated CREB1 to CREBBP. Interacts with HDAC7. Interacts with MTA1. Interacts with PWWP2B. Interacts with RB1 (via viral protein-binding domain). Interacts with SUV39H1.

It localises to the nucleus. In terms of biological role, core histone-binding subunit that may target chromatin remodeling factors, histone acetyltransferases and histone deacetylases to their histone substrates in a manner that is regulated by nucleosomal DNA. Component of several complexes which regulate chromatin metabolism. These include the type B histone acetyltransferase (HAT) complex, which is required for chromatin assembly following DNA replication; the core histone deacetylase (HDAC) complex, which promotes histone deacetylation and consequent transcriptional repression; the nucleosome remodeling and histone deacetylase complex (the NuRD complex), which promotes transcriptional repression by histone deacetylation and nucleosome remodeling; and the PRC2/EED-EZH2 complex, which promotes repression of homeotic genes during development; and the NURF (nucleosome remodeling factor) complex. This chain is Histone-binding protein RBBP7 (RBBP7), found in Bos taurus (Bovine).